We begin with the raw amino-acid sequence, 888 residues long: Translation initiation factor IF-2 (888 aa).

2 disordered regions span residues threonine 96 to glutamate 122 and glutamate 158 to threonine 302. 2 stretches are compositionally biased toward basic and acidic residues: residues lysine 98 to serine 114 and glutamate 158 to arginine 167. Residues threonine 181–glutamate 206 show a composition bias toward polar residues. Over residues threonine 207 to alanine 225 the composition is skewed to low complexity. 2 stretches are compositionally biased toward basic and acidic residues: residues alanine 226–glutamate 243 and glutamate 253–glycine 269. The region spanning serine 390 to lysine 559 is the tr-type G domain. Residues glycine 399–threonine 406 form a G1 region. Glycine 399 to threonine 406 serves as a coordination point for GTP. The G2 stretch occupies residues glycine 424 to histidine 428. Residues aspartate 445 to glycine 448 form a G3 region. GTP-binding positions include aspartate 445 to histidine 449 and asparagine 499 to aspartate 502. Positions asparagine 499 to aspartate 502 are G4. The G5 stretch occupies residues serine 535 to lysine 537.

The protein belongs to the TRAFAC class translation factor GTPase superfamily. Classic translation factor GTPase family. IF-2 subfamily.

The protein localises to the cytoplasm. Its function is as follows. One of the essential components for the initiation of protein synthesis. Protects formylmethionyl-tRNA from spontaneous hydrolysis and promotes its binding to the 30S ribosomal subunits. Also involved in the hydrolysis of GTP during the formation of the 70S ribosomal complex. The chain is Translation initiation factor IF-2 from Nitrosomonas eutropha (strain DSM 101675 / C91 / Nm57).